Reading from the N-terminus, the 183-residue chain is Shikimate kinase (183 aa).

18 to 23 serves as a coordination point for ATP; the sequence is GVGKTT. Mg(2+) is bound at residue Thr-22. Residues Asp-40, Arg-64, and Gly-86 each contribute to the substrate site. Arg-125 provides a ligand contact to ATP. Residue Arg-143 coordinates substrate.

The protein belongs to the shikimate kinase family. Monomer. Mg(2+) serves as cofactor.

It is found in the cytoplasm. The catalysed reaction is shikimate + ATP = 3-phosphoshikimate + ADP + H(+). The protein operates within metabolic intermediate biosynthesis; chorismate biosynthesis; chorismate from D-erythrose 4-phosphate and phosphoenolpyruvate: step 5/7. Its function is as follows. Catalyzes the specific phosphorylation of the 3-hydroxyl group of shikimic acid using ATP as a cosubstrate. The polypeptide is Shikimate kinase (Oceanobacillus iheyensis (strain DSM 14371 / CIP 107618 / JCM 11309 / KCTC 3954 / HTE831)).